The chain runs to 334 residues: Antho-RFamide neuropeptides (334 aa).

Positions 1-26 (MLVAMTTASYVTILVTLLFHILTINA) are cleaved as a signal peptide. A propeptide spanning residues 27–116 (KTVTKRAKET…REFQGRFGRE (90 aa)) is cleaved from the precursor. Basic and acidic residues-rich tracts occupy residues 115-289 (REQG…RELL) and 303-334 (PQTRFRDVQMTRRNVAKKDKIEESNDEEANKS). The interval 115–334 (REQGRFGREE…ESNDEEANKS (220 aa)) is disordered. At Phe-120 the chain carries Phenylalanine amide. Residues 122-125 (REED) constitute a propeptide that is removed on maturation. Phe-129 bears the Phenylalanine amide mark. Residues 131 to 134 (REED) constitute a propeptide that is removed on maturation. Position 138 is a phenylalanine amide (Phe-138). Positions 140-142 (REE) are excised as a propeptide. Phe-146 bears the Phenylalanine amide mark. Positions 148-151 (REED) are excised as a propeptide. The residue at position 155 (Phe-155) is a Phenylalanine amide. A propeptide spanning residues 157-160 (REED) is cleaved from the precursor. Phe-164 bears the Phenylalanine amide mark. The propeptide occupies 166–169 (REED). Residue Phe-173 is modified to Phenylalanine amide. The propeptide occupies 175-178 (REEE). A Phenylalanine amide modification is found at Phe-182. Positions 184–187 (REED) are excised as a propeptide. Phe-191 carries the phenylalanine amide modification. The propeptide occupies 193-196 (REEE). Phe-200 is modified (phenylalanine amide). Positions 202-205 (REED) are excised as a propeptide. Phe-209 carries the post-translational modification Phenylalanine amide. Residues 211-214 (REED) constitute a propeptide that is removed on maturation. Phenylalanine amide is present on Phe-218. Positions 220-223 (REEE) are excised as a propeptide. The residue at position 227 (Phe-227) is a Phenylalanine amide. Residues 229 to 233 (KRDED) constitute a propeptide that is removed on maturation. The residue at position 237 (Phe-237) is a Phenylalanine amide. Positions 239 to 242 (KRED) are excised as a propeptide. Position 246 is a phenylalanine amide (Phe-246). The propeptide occupies 248 to 252 (KRDED). Phe-256 bears the Phenylalanine amide mark. Positions 258–262 (KRDED) are excised as a propeptide. Phe-266 bears the Phenylalanine amide mark. A propeptide spanning residues 268 to 271 (KRED) is cleaved from the precursor. The residue at position 275 (Phe-275) is a Phenylalanine amide. Residues 277 to 280 (KRED) constitute a propeptide that is removed on maturation. Phe-284 carries the post-translational modification Phenylalanine amide. A propeptide spanning residues 286–334 (RELLAKLNKRTTSIQEDPQTRFRDVQMTRRNVAKKDKIEESNDEEANKS) is cleaved from the precursor.

This sequence belongs to the FARP (FMRFamide related peptide) family. In terms of tissue distribution, neurons associated with smooth muscle fibers.

The protein localises to the secreted. Its function is as follows. Not known but it could act as a transmitter at neuromuscular synapses. In Calliactis parasitica (Sea anemone), this protein is Antho-RFamide neuropeptides.